We begin with the raw amino-acid sequence, 364 residues long: Putative methylthioribose-1-phosphate isomerase (364 aa).

Substrate is bound by residues 57 to 59 (RGA), R100, and Q206. The active-site Proton donor is D247. Substrate is bound at residue 257–258 (NK).

Belongs to the eIF-2B alpha/beta/delta subunits family. MtnA subfamily.

The enzyme catalyses 5-(methylsulfanyl)-alpha-D-ribose 1-phosphate = 5-(methylsulfanyl)-D-ribulose 1-phosphate. Functionally, catalyzes the interconversion of methylthioribose-1-phosphate (MTR-1-P) into methylthioribulose-1-phosphate (MTRu-1-P). The polypeptide is Putative methylthioribose-1-phosphate isomerase (Pyrococcus horikoshii (strain ATCC 700860 / DSM 12428 / JCM 9974 / NBRC 100139 / OT-3)).